The sequence spans 158 residues: uncharacterized protein (158 aa).

The helical transmembrane segment at 33-53 (VLAAVPQLGAAKVLVLLLLGV) threads the bilayer.

It is found in the membrane. This is an uncharacterized protein from Saccharomyces cerevisiae (strain ATCC 204508 / S288c) (Baker's yeast).